The sequence spans 301 residues: Acetyl-coenzyme A carboxylase carboxyl transferase subunit beta (301 aa).

The 270-residue stretch at 29-298 folds into the CoA carboxyltransferase N-terminal domain; sequence LWVKCPETGQ…AEPAEEEAEP (270 aa).

The protein belongs to the AccD/PCCB family. Acetyl-CoA carboxylase is a heterohexamer composed of biotin carboxyl carrier protein (AccB), biotin carboxylase (AccC) and two subunits each of ACCase subunit alpha (AccA) and ACCase subunit beta (AccD).

Its subcellular location is the cytoplasm. It catalyses the reaction N(6)-carboxybiotinyl-L-lysyl-[protein] + acetyl-CoA = N(6)-biotinyl-L-lysyl-[protein] + malonyl-CoA. It participates in lipid metabolism; malonyl-CoA biosynthesis; malonyl-CoA from acetyl-CoA: step 1/1. Functionally, component of the acetyl coenzyme A carboxylase (ACC) complex. Biotin carboxylase (BC) catalyzes the carboxylation of biotin on its carrier protein (BCCP) and then the CO(2) group is transferred by the transcarboxylase to acetyl-CoA to form malonyl-CoA. This is Acetyl-coenzyme A carboxylase carboxyl transferase subunit beta from Methylobacterium nodulans (strain LMG 21967 / CNCM I-2342 / ORS 2060).